A 509-amino-acid chain; its full sequence is Dye-decolorizing peroxidase AauDyP1 (509 aa).

Residues 1–22 form the signal peptide; that stretch reads MRLSPVFVALLSGLLAADLGLA. Positions 23–61 are excised as a propeptide; the sequence is RSVAPRVADSPAAVTGTRKTSLLKNVAGLPPVPSAAQVA. Asp229 (proton acceptor) is an active-site residue. N-linked (GlcNAc...) asparagine glycosylation is present at Asn343. A heme-binding site is contributed by His365. Residues Asn383, Asn410, and Asn476 are each glycosylated (N-linked (GlcNAc...) asparagine).

It belongs to the DyP-type peroxidase family. Heme b serves as cofactor.

Its subcellular location is the secreted. It carries out the reaction Reactive Blue 5 + 2 H2O2 = 2,2'-disulfonyl azobenzene + 3-[(4-amino-6-chloro-1,3,5-triazin-2-yl)amino]benzenesulfonate + phthalate + 2 H2O + 2 H(+). It catalyses the reaction 2 a phenolic donor + H2O2 = 2 a phenolic radical donor + 2 H2O. With respect to regulation, inhibited by imidazole. Functionally, manganese-independent peroxidase that is able to convert a large number of compounds, but its physiological substrate is not known. In addition to classic peroxidase substrates (e.g. 2,6-dimethoxyphenol), oxidizes dyes such as Reactive Blue 5 and Reactive Black 5. This chain is Dye-decolorizing peroxidase AauDyP1, found in Auricularia auricula-judae (Judas ear fungus).